The sequence spans 501 residues: Solute carrier family 2, facilitated glucose transporter member 5 (501 aa).

Met1 carries the post-translational modification N-acetylmethionine. Residues 1–18 are Cytoplasmic-facing; sequence MEPQDPVKREGRLTPVIV. Residues 19 to 39 form a helical membrane-spanning segment; that stretch reads LATLIAAFGSSFQYGYNVATI. Tyr32 contributes to the D-fructose binding site. At 40-68 the chain is on the extracellular side; that stretch reads NSPSEFMKDFYNYTYYDRVGEYMNEFYLT. Asn51 is a glycosylation site (N-linked (GlcNAc...) asparagine). Residues 69 to 91 form a helical membrane-spanning segment; sequence LLWSVTVSMFPFGGFLGSLMVGP. Residues 92-98 lie on the Cytoplasmic side of the membrane; that stretch reads LVNNLGR. Residues 99 to 119 form a helical membrane-spanning segment; the sequence is KGTLLFNNIFSIVPALLMGFS. Topologically, residues 120 to 126 are extracellular; it reads DLAKSFE. A helical membrane pass occupies residues 127 to 149; the sequence is MIIVARVLVGICAGLSSNVVPMY. The Cytoplasmic segment spans residues 150-161; it reads LGELAPKNWRGA. A helical transmembrane segment spans residues 162–182; sequence LGVVPQLFITIGILVAQIFGL. Position 167 (Gln167) interacts with D-fructose. Residues 183 to 192 are Extracellular-facing; sequence RSLLANEEGW. A helical membrane pass occupies residues 193 to 213; that stretch reads PILLGLTGIPAVLQLLFLPFF. Over 214–277 the chain is Cytoplasmic; the sequence is PESPRYLLIQ…LFKMRSLRWQ (64 aa). A helical transmembrane segment spans residues 278-298; that stretch reads VISIIVLMAGQQLSGVNAIYY. Residues Gln288 and 296–298 contribute to the D-fructose site; that span reads IYY. Residues 299–313 lie on the Extracellular side of the membrane; sequence YADQIYLSAGVKEDD. The chain crosses the membrane as a helical span at residues 314 to 334; sequence VQYVTAGTGAVNVLITVCAIF. Residues 335 to 342 lie on the Cytoplasmic side of the membrane; sequence VVELMGRR. Residues 343–363 traverse the membrane as a helical segment; the sequence is FLLLLGFSVCFTACCVLTGAL. Over 364 to 371 the chain is Extracellular; sequence AMQDVISW. The chain crosses the membrane as a helical span at residues 372–394; the sequence is MPYVSIACVISYVIGHALGPSPI. His387 serves as a coordination point for D-fructose. The Cytoplasmic portion of the chain corresponds to 395 to 412; that stretch reads PALLVTEIFLQSSRPAAY. Residues 413 to 433 form a helical membrane-spanning segment; the sequence is MVAGTVHWLSNFTVGLVFPFI. 419 to 420 is a D-fructose binding site; that stretch reads HW. Residues 434–439 lie on the Extracellular side of the membrane; sequence QVGLGA. The chain crosses the membrane as a helical span at residues 440–460; that stretch reads YSFVIFAVICFLTTVYIFLII. The Cytoplasmic segment spans residues 461–501; sequence PETKSKTFIEINQIFIKMNKVPGVHPEKEELKEFPPSTARQ.

It belongs to the major facilitator superfamily. Sugar transporter (TC 2.A.1.1) family. Glucose transporter subfamily.

The protein localises to the apical cell membrane. It is found in the cell membrane. The protein resides in the sarcolemma. The catalysed reaction is D-fructose(out) = D-fructose(in). Functions as a fructose transporter that has only low activity with other monosaccharides. Can mediate the uptake of deoxyglucose, but with low efficiency. Essential for fructose uptake in the small intestine. Plays a role in the regulation of salt uptake and blood pressure in response to dietary fructose. Required for the development of high blood pressure in response to high dietary fructose intake. The chain is Solute carrier family 2, facilitated glucose transporter member 5 from Ovis aries (Sheep).